Consider the following 151-residue polypeptide: Tetratricopeptide repeat protein 32 (151 aa).

TPR repeat units follow at residues 8–41, 58–91, and 92–125; these read SHATLTLAQAHFNNGEYAEAEALYSAYIRRCACA, ATAYNNRGQIKYFRVDFYEAMDDYTSAIEVQPNF, and EVPYYNRGLILYRLGYFDDALEDFKKVLDLNPGF.

The polypeptide is Tetratricopeptide repeat protein 32 (TTC32) (Homo sapiens (Human)).